A 160-amino-acid chain; its full sequence is Small ribosomal subunit protein uS19 (160 aa).

The interval 1–27 (MARQKFSGKGGKGKSKKGQQSTAPRRR) is disordered.

The protein belongs to the universal ribosomal protein uS19 family.

Functionally, protein S19 forms a complex with S13 that binds strongly to the 16S ribosomal RNA. The protein is Small ribosomal subunit protein uS19 of Methanococcus vannielii (strain ATCC 35089 / DSM 1224 / JCM 13029 / OCM 148 / SB).